Consider the following 456-residue polypeptide: tRNA (guanine(37)-N(1))-methyltransferase (456 aa).

S-adenosyl-L-methionine is bound by residues H246, 284-285 (DL), 310-311 (DG), and N336.

This sequence belongs to the class I-like SAM-binding methyltransferase superfamily. TRM5/TYW2 family. As to quaternary structure, monomer.

The protein resides in the mitochondrion matrix. It is found in the nucleus. It localises to the cytoplasm. It catalyses the reaction guanosine(37) in tRNA + S-adenosyl-L-methionine = N(1)-methylguanosine(37) in tRNA + S-adenosyl-L-homocysteine + H(+). In terms of biological role, specifically methylates the N1 position of guanosine-37 in various cytoplasmic and mitochondrial tRNAs. Methylation is not dependent on the nature of the nucleoside 5' of the target nucleoside. This is the first step in the biosynthesis of wybutosine (yW), a modified base adjacent to the anticodon of tRNAs and required for accurate decoding. The chain is tRNA (guanine(37)-N(1))-methyltransferase from Ciona intestinalis (Transparent sea squirt).